The chain runs to 20 residues: Non-specific lipid-transfer protein-like protein (20 aa).

The protein belongs to the plant LTP family.

This is Non-specific lipid-transfer protein-like protein from Jatropha curcas (Barbados nut).